Reading from the N-terminus, the 529-residue chain is MSDKKLLEEIKKRRTFAIISHPDAGKTTITEKVLLFGRALQTAGTVKGKKSGQHAKSDWMEMEKERGISVTTSVMQFPYSDHLVNLLDTPGHEDFSEDTYRTLTAVDSCLMVIDAAKGVEDRTRKLMEVTRLRDTPIVTFMNKLDRDIRDPMELLDEVETELDILCAPITWPIGCGKSFKGVYHLHRDETILYQSGHGHTIQDVRIIKGLDNPELDTAVGSDLAETLRDELELVRGASNEFDQELFREGQLTPVFFGTALGNFGVDHMLDGLVEWAPAPLGRETEEGTIESTDGKFSGFVFKIQANMDPKHRDRIAFCRIVSGKYEKGMKMRNSRLGKDVRISDALTFLAGDRSLLEEAYAGDIIGLHNHGTIRIGDTFTSGDNYRFTGIPNFAPELFKRIRLKDPLKQKQLLKGLIQLSEEGAVQVFRPLANNDLIVGAVGVLQFDVVVARLKAEYNVDALYEHVNVATARWVYSSDEKKLDEFRRKGEQNLALDGGDNLTYIAPTMVNLQLAQERYPDIQFTNTREN.

The tr-type G domain occupies 11 to 280 (KKRRTFAIIS…GLVEWAPAPL (270 aa)). GTP contacts are provided by residues 20 to 27 (SHPDAGKT), 88 to 92 (DTPGH), and 142 to 145 (NKLD).

It belongs to the TRAFAC class translation factor GTPase superfamily. Classic translation factor GTPase family. PrfC subfamily.

The protein localises to the cytoplasm. In terms of biological role, increases the formation of ribosomal termination complexes and stimulates activities of RF-1 and RF-2. It binds guanine nucleotides and has strong preference for UGA stop codons. It may interact directly with the ribosome. The stimulation of RF-1 and RF-2 is significantly reduced by GTP and GDP, but not by GMP. This is Peptide chain release factor 3 from Alteromonas mediterranea (strain DSM 17117 / CIP 110805 / LMG 28347 / Deep ecotype).